Here is a 186-residue protein sequence, read N- to C-terminus: MIHVKYIILGFIMVSSLNLYAANNDIIANKKVVKVEVSNEHLKTLNEASTLLISCVDFRLIDETDKLMKQLGLEDNFDKVSLPGASLALINDKYTYWGKTIEDTIEILQELHNIKQIVFLDHRECGAYKILIGQEQLNTKEKETAAHAAILNKARDIIKEKFPQLKVYTFLMGLDGVVEQIYEIPS.

The first 21 residues, 1 to 21 (MIHVKYIILGFIMVSSLNLYA), serve as a signal peptide directing secretion.

This is an uncharacterized protein from Rickettsia conorii (strain ATCC VR-613 / Malish 7).